Consider the following 197-residue polypeptide: Protein GrpE (197 aa).

Positions 1–40 (MSSKEQKTPEGQAPEEIIMDQHEEIEAVEPEASAEQVDPR) are disordered.

Belongs to the GrpE family. Homodimer.

It localises to the cytoplasm. Its function is as follows. Participates actively in the response to hyperosmotic and heat shock by preventing the aggregation of stress-denatured proteins, in association with DnaK and GrpE. It is the nucleotide exchange factor for DnaK and may function as a thermosensor. Unfolded proteins bind initially to DnaJ; upon interaction with the DnaJ-bound protein, DnaK hydrolyzes its bound ATP, resulting in the formation of a stable complex. GrpE releases ADP from DnaK; ATP binding to DnaK triggers the release of the substrate protein, thus completing the reaction cycle. Several rounds of ATP-dependent interactions between DnaJ, DnaK and GrpE are required for fully efficient folding. In Escherichia coli (strain K12 / DH10B), this protein is Protein GrpE.